We begin with the raw amino-acid sequence, 1299 residues long: MAP3K epsilon protein kinase 1 (1299 aa).

In terms of domain architecture, Protein kinase spans 20 to 274 (YMLGDEIGKG…AKTLLSHPWI (255 aa)). 2 HEAT repeats span residues 25-62 (EIGK…EDLN) and 86-125 (LKTK…TVYI). Residues 26-34 (IGKGAYGRV) and lysine 49 each bind ATP. Aspartate 144 (proton acceptor) is an active-site residue. One copy of the HEAT 3 repeat lies at 218–256 (PYYDLQPMPALFRIVQDDSPPIPDSLSPDITDFLRQCFK). Disordered regions lie at residues 291–458 (IRYM…GNEL) and 483–509 (GKLN…DGGK). A compositionally biased stretch (low complexity) spans 374–385 (SSLQSSTCSISS). Polar residues-rich tracts occupy residues 415–432 (ATKQ…QRSH) and 488–501 (ASAS…NQGD). HEAT repeat units follow at residues 532 to 570 (SNDG…LLPL), 611 to 649 (VFVT…DNID), 653 to 694 (NACL…SSSL), 698 to 736 (MFIA…VFKL), 743 to 780 (NDFC…SGQL), 781 to 820 (DQHE…PDGD), 868 to 900 (QPEQ…HIAG), 901 to 939 (LEKH…AASA), 955 to 994 (SDTS…ADTT), 998 to 1036 (YMCS…DPNC), 1043 to 1081 (ADAI…INKR), 1085 to 1122 (QAAE…ASRN), 1125 to 1164 (EQLR…NDNR), 1186 to 1210 (CPER…RINT), 1211 to 1249 (TLAV…HHPR), and 1279 to 1299 (QVLV…NTVL). Residues 795-852 (VLKTRPGGGEEPSNSQRSDLYQPDGDRPRSSSAALDATEDVKQHHRISISSNRTSTDK) form a disordered region.

The protein belongs to the protein kinase superfamily. Ser/Thr protein kinase family. Autophosphorylated. As to expression, expressed in both the sporophytic and the gametophytic tissues, especially in dividing cells.

Its subcellular location is the cytoplasm. The protein resides in the cytoskeleton. It is found in the microtubule organizing center. It localises to the nucleus. The protein localises to the nucleolus. Its subcellular location is the cell membrane. The enzyme catalyses L-seryl-[protein] + ATP = O-phospho-L-seryl-[protein] + ADP + H(+). It catalyses the reaction L-threonyl-[protein] + ATP = O-phospho-L-threonyl-[protein] + ADP + H(+). Serine/threonine-protein kinase involved in the spatial and temporal control system organizing cortical activities in mitotic and postmitotic cells. Required for the normal functioning of the plasma membrane in developing pollen. Involved in the regulation of cell expansion and embryo development. This Brassica napus (Rape) protein is MAP3K epsilon protein kinase 1.